Reading from the N-terminus, the 270-residue chain is Glutamate 5-kinase (270 aa).

Residue Lys-18 participates in ATP binding. Positions 54, 141, and 153 each coordinate substrate. 173–174 (SD) is a binding site for ATP.

It belongs to the glutamate 5-kinase family.

Its subcellular location is the cytoplasm. It carries out the reaction L-glutamate + ATP = L-glutamyl 5-phosphate + ADP. The protein operates within amino-acid biosynthesis; L-proline biosynthesis; L-glutamate 5-semialdehyde from L-glutamate: step 1/2. Its function is as follows. Catalyzes the transfer of a phosphate group to glutamate to form L-glutamate 5-phosphate. In Leifsonia xyli subsp. xyli (strain CTCB07), this protein is Glutamate 5-kinase.